The primary structure comprises 363 residues: Putative glutamate--cysteine ligase 2-3 (363 aa).

Belongs to the glutamate--cysteine ligase type 2 family. YbdK subfamily.

The enzyme catalyses L-cysteine + L-glutamate + ATP = gamma-L-glutamyl-L-cysteine + ADP + phosphate + H(+). Its function is as follows. ATP-dependent carboxylate-amine ligase which exhibits weak glutamate--cysteine ligase activity. The chain is Putative glutamate--cysteine ligase 2-3 from Rubrobacter xylanophilus (strain DSM 9941 / JCM 11954 / NBRC 16129 / PRD-1).